The following is a 354-amino-acid chain: tRNA N6-adenosine threonylcarbamoyltransferase (354 aa).

The Fe cation site is built by His-116 and His-120. Substrate is bound by residues 139–143, Asp-172, Gly-185, and Asn-281; that span reads LVSGG. Asp-309 is a binding site for Fe cation.

The protein belongs to the KAE1 / TsaD family. The cofactor is Fe(2+).

The protein resides in the cytoplasm. It carries out the reaction L-threonylcarbamoyladenylate + adenosine(37) in tRNA = N(6)-L-threonylcarbamoyladenosine(37) in tRNA + AMP + H(+). Functionally, required for the formation of a threonylcarbamoyl group on adenosine at position 37 (t(6)A37) in tRNAs that read codons beginning with adenine. Is involved in the transfer of the threonylcarbamoyl moiety of threonylcarbamoyl-AMP (TC-AMP) to the N6 group of A37, together with TsaE and TsaB. TsaD likely plays a direct catalytic role in this reaction. This is tRNA N6-adenosine threonylcarbamoyltransferase from Parasynechococcus marenigrum (strain WH8102).